Consider the following 103-residue polypeptide: Large ribosomal subunit protein eL21 (103 aa).

It belongs to the eukaryotic ribosomal protein eL21 family.

The chain is Large ribosomal subunit protein eL21 from Sulfurisphaera tokodaii (strain DSM 16993 / JCM 10545 / NBRC 100140 / 7) (Sulfolobus tokodaii).